The primary structure comprises 320 residues: GTP 3',8-cyclase (320 aa).

The Radical SAM core domain occupies 4–227; the sequence is LYSRRINYMR…METEKSSPAK (224 aa). Arg-13 is a GTP binding site. [4Fe-4S] cluster is bound by residues Cys-20 and Cys-24. Tyr-26 contributes to the S-adenosyl-L-methionine binding site. [4Fe-4S] cluster is bound at residue Cys-27. GTP is bound at residue Arg-63. Gly-67 serves as a coordination point for S-adenosyl-L-methionine. A GTP-binding site is contributed by Thr-94. Ser-118 serves as a coordination point for S-adenosyl-L-methionine. Lys-155 contributes to the GTP binding site. Met-189 lines the S-adenosyl-L-methionine pocket. Residues Cys-249 and Cys-252 each contribute to the [4Fe-4S] cluster site. GTP is bound at residue 254–256; that stretch reads RVR. Cys-266 serves as a coordination point for [4Fe-4S] cluster. The segment covering 300–312 has biased composition (basic and acidic residues); it reads KHDLLTDSHEESN. The disordered stretch occupies residues 300 to 320; that stretch reads KHDLLTDSHEESNRGMSQIGG.

It belongs to the radical SAM superfamily. MoaA family. As to quaternary structure, monomer and homodimer. [4Fe-4S] cluster serves as cofactor.

It carries out the reaction GTP + AH2 + S-adenosyl-L-methionine = (8S)-3',8-cyclo-7,8-dihydroguanosine 5'-triphosphate + 5'-deoxyadenosine + L-methionine + A + H(+). The protein operates within cofactor biosynthesis; molybdopterin biosynthesis. Its function is as follows. Catalyzes the cyclization of GTP to (8S)-3',8-cyclo-7,8-dihydroguanosine 5'-triphosphate. The sequence is that of GTP 3',8-cyclase from Alkaliphilus oremlandii (strain OhILAs) (Clostridium oremlandii (strain OhILAs)).